The sequence spans 910 residues: Epithelial discoidin domain-containing receptor 1 (910 aa).

Positions 1–19 (MGTGTLSSLLLLLLLVTIG) are cleaved as a signal peptide. Topologically, residues 22-414 (DMKGHFDPAK…VAKAEGSPTA (393 aa)) are extracellular. The 155-residue stretch at 32-186 (CRYALGMQDR…VCLRVELYGC (155 aa)) folds into the F5/8 type C domain. Cystine bridges form between C32-C186 and C75-C178. A DS-like domain region spans residues 193-368 (LSYTAPVGQT…LFSEISFISD (176 aa)). Residues N212, Q231, D234, V236, Y254, and Y256 each contribute to the Ca(2+) site. Residue N212 is glycosylated (N-linked (GlcNAc...) asparagine). N-linked (GlcNAc...) asparagine glycosylation is present at N261. A disulfide bridge links C304 with C349. 2 residues coordinate Ca(2+): S361 and E362. N-linked (GlcNAc...) asparagine glycosylation is found at N371 and N391. The helical transmembrane segment at 415 to 435 (ILIGCLVAIILLLLLIIALML) threads the bilayer. Residues 436 to 910 (WRLHWRRLLS…FLADDALNTV (475 aa)) are Cytoplasmic-facing. The segment at 467-494 (ILINNRPGPREPPPYQEPRPRGTPTHSA) is disordered. Positions 478 to 481 (PPPY) match the PPxY motif motif. Phosphotyrosine; by autocatalysis occurs at positions 481, 510, and 517. Residues 607–902 (LRFKEKLGEG…PPFSQLHRFL (296 aa)) form the Protein kinase domain. ATP contacts are provided by residues 613–621 (LGEGQFGEV) and K652. Y737 carries the post-translational modification Phosphotyrosine; by autocatalysis. The active-site Proton acceptor is the D763. 3 positions are modified to phosphotyrosine; by autocatalysis: Y789, Y793, and Y794.

It belongs to the protein kinase superfamily. Tyr protein kinase family. Insulin receptor subfamily. Homodimer. Interacts (via PPxY motif) with WWC1 (via WW domains) in a collagen-regulated manner. Forms a tripartite complex with WWC1 and PRKCZ, but predominantly in the absence of collagen. Interacts (tyrosine phosphorylated) with SHC1. Interacts with SRC. Interacts with MYH9. Interacts with CDH1. Interacts with PTPN11. Interacts with NCK2. Post-translationally, autophosphorylated in response to fibrillar collagen binding. Various embryonic and adult tissues; also proliferative zones of the developing brain; hippocampal neurons.

It is found in the cell membrane. The catalysed reaction is L-tyrosyl-[protein] + ATP = O-phospho-L-tyrosyl-[protein] + ADP + H(+). Functionally, tyrosine kinase that functions as a cell surface receptor for fibrillar collagen and regulates cell attachment to the extracellular matrix, remodeling of the extracellular matrix, cell migration, differentiation, survival and cell proliferation. Collagen binding triggers a signaling pathway that involves SRC and leads to the activation of MAP kinases. Regulates remodeling of the extracellular matrix by up-regulation of the matrix metalloproteinases MMP2, MMP7 and MMP9, and thereby facilitates cell migration and wound healing. Promotes smooth muscle cell migration, and thereby contributes to arterial wound healing. Also plays a role in tumor cell invasion. Phosphorylates PTPN11. Required for normal blastocyst implantation during pregnancy, for normal mammary gland differentiation and normal lactation. Required for normal ear morphology and normal hearing. The sequence is that of Epithelial discoidin domain-containing receptor 1 (Ddr1) from Rattus norvegicus (Rat).